Reading from the N-terminus, the 379-residue chain is Cytochrome b (379 aa).

4 consecutive transmembrane segments (helical) span residues 33–53 (FGSL…FLAM), 77–98 (WLIR…FIHV), 113–133 (WNIG…GYVL), and 178–198 (FFAF…VHLL). 2 residues coordinate heme b: histidine 83 and histidine 97. 2 residues coordinate heme b: histidine 182 and histidine 196. Position 201 (histidine 201) interacts with a ubiquinone. 4 helical membrane passes run 226–246 (TKDL…VLFF), 288–308 (LGGV…PLLN), 320–340 (VTQV…WIGG), and 347–367 (FTTI…ILIP).

Belongs to the cytochrome b family. In terms of assembly, the cytochrome bc1 complex contains 11 subunits: 3 respiratory subunits (MT-CYB, CYC1 and UQCRFS1), 2 core proteins (UQCRC1 and UQCRC2) and 6 low-molecular weight proteins (UQCRH/QCR6, UQCRB/QCR7, UQCRQ/QCR8, UQCR10/QCR9, UQCR11/QCR10 and a cleavage product of UQCRFS1). This cytochrome bc1 complex then forms a dimer. Heme b is required as a cofactor.

It is found in the mitochondrion inner membrane. Functionally, component of the ubiquinol-cytochrome c reductase complex (complex III or cytochrome b-c1 complex) that is part of the mitochondrial respiratory chain. The b-c1 complex mediates electron transfer from ubiquinol to cytochrome c. Contributes to the generation of a proton gradient across the mitochondrial membrane that is then used for ATP synthesis. The chain is Cytochrome b (MT-CYB) from Akodon cursor (Cursor grass mouse).